Here is a 424-residue protein sequence, read N- to C-terminus: MGFTGRRGKAEIIEAFSKHVSPYKAKFFSMVGIDFVPARREGVWYWDLDGRKLMDCHCNGGVFNLGHRHPEIVKTLVEALDELDIGNHHLISEQRARLAEKLAELMPGDISRTVFGVGGGEAIDFAIKLARGHTGRKKIIYAKGGYHGHTGFALAAGDEKYRKPFEPLAPGFVEVPFGDAEAVEKAVDDDTAAVLFETIPATLGMPLPPEDFYRRVREICDEKGCLMIMDEVQTGLGRTGKMWGIEHYKVVPDVIVTAKGLSGGVYPISATCFKEGLDDFMAENPFIHVSTFGGAELGCVVAEKVLEITSRESFLENVRKTGEALSEILGKLKDEYDFVDEIRQKGLFIGIKMVEEGWGPLLSISCYHSGILAVYANNDTSVMQFLPPLIVGEKEVDYIREKLAGAMEIASQRREMVEFIRKML.

The residue at position 259 (K259) is an N6-(pyridoxal phosphate)lysine.

The protein belongs to the class-III pyridoxal-phosphate-dependent aminotransferase family. Pyridoxal 5'-phosphate serves as cofactor.

This is an uncharacterized protein from Archaeoglobus fulgidus (strain ATCC 49558 / DSM 4304 / JCM 9628 / NBRC 100126 / VC-16).